The sequence spans 191 residues: Peptidyl-tRNA hydrolase (191 aa).

Tyrosine 14 contacts tRNA. Residue histidine 19 is the Proton acceptor of the active site. Residues tyrosine 64, asparagine 66, and asparagine 112 each coordinate tRNA.

This sequence belongs to the PTH family. Monomer.

The protein resides in the cytoplasm. It carries out the reaction an N-acyl-L-alpha-aminoacyl-tRNA + H2O = an N-acyl-L-amino acid + a tRNA + H(+). In terms of biological role, hydrolyzes ribosome-free peptidyl-tRNAs (with 1 or more amino acids incorporated), which drop off the ribosome during protein synthesis, or as a result of ribosome stalling. Its function is as follows. Catalyzes the release of premature peptidyl moieties from peptidyl-tRNA molecules trapped in stalled 50S ribosomal subunits, and thus maintains levels of free tRNAs and 50S ribosomes. This chain is Peptidyl-tRNA hydrolase, found in Clostridium botulinum (strain Eklund 17B / Type B).